The chain runs to 222 residues: Large ribosomal subunit protein bL20 (222 aa).

It belongs to the bacterial ribosomal protein bL20 family.

Functionally, binds directly to 23S ribosomal RNA and is necessary for the in vitro assembly process of the 50S ribosomal subunit. It is not involved in the protein synthesizing functions of that subunit. This Paenarthrobacter aurescens (strain TC1) protein is Large ribosomal subunit protein bL20 (rplT).